The sequence spans 614 residues: V-type proton ATPase catalytic subunit A (614 aa).

247–254 provides a ligand contact to ATP; sequence GAFGCGKT.

It belongs to the ATPase alpha/beta chains family. As to quaternary structure, V-ATPase is a heteromultimeric enzyme made up of two complexes: the ATP-hydrolytic V1 complex and the proton translocation V0 complex. The V1 complex consists of three catalytic AB heterodimers that form a heterohexamer, three peripheral stalks each consisting of EG heterodimers, one central rotor including subunits D and F, and the regulatory subunits C and H. The proton translocation complex V0 consists of the proton transport subunit a, a ring of proteolipid subunits c9c'', rotary subunit d, subunits e and f, and the accessory subunits VhaAC45 and ATP6AP2.

It carries out the reaction ATP + H2O + 4 H(+)(in) = ADP + phosphate + 5 H(+)(out). Its activity is regulated as follows. ATP hydrolysis occurs at the interface between the nucleotide-binding domains of subunits A and B. ATP hydrolysis triggers a conformational change in the subunits D and F, which induces a shift of subunit d. The c-ring is subsequently rotated and results in a continuous proton translocation across the membrane. In terms of biological role, catalytic subunit of the V1 complex of vacuolar(H+)-ATPase (V-ATPase), a multisubunit enzyme composed of a peripheral complex (V1) that hydrolyzes ATP and a membrane integral complex (V0) that translocates protons. V-ATPase is responsible for acidifying and maintaining the pH of intracellular compartments and in some cell types, is targeted to the plasma membrane, where it is responsible for acidifying the extracellular environment. The polypeptide is V-type proton ATPase catalytic subunit A (VhaA) (Aedes aegypti (Yellowfever mosquito)).